The chain runs to 91 residues: MARVTVQDAVEKIGNRFDLVLVAARRARQIQTGGKDALVPEENDKYTVIALREIEEGLITSQILDVRDRQEQQEQEAAEIQAVTAIAEGRR.

It belongs to the RNA polymerase subunit omega family. As to quaternary structure, the RNAP catalytic core consists of 2 alpha, 1 beta, 1 beta' and 1 omega subunit. When a sigma factor is associated with the core the holoenzyme is formed, which can initiate transcription.

It carries out the reaction RNA(n) + a ribonucleoside 5'-triphosphate = RNA(n+1) + diphosphate. Its function is as follows. Promotes RNA polymerase assembly. Latches the N- and C-terminal regions of the beta' subunit thereby facilitating its interaction with the beta and alpha subunits. This Serratia proteamaculans (strain 568) protein is DNA-directed RNA polymerase subunit omega.